Consider the following 282-residue polypeptide: U1 small nuclear ribonucleoprotein A (282 aa).

2 consecutive RRM domains span residues 10 to 89 and 208 to 282; these read NTIY…YSKT and HILF…FAKK.

This sequence belongs to the RRM U1 A/B'' family. U1 snRNP is composed of the 7 core Sm proteins snrpb, snrpd1, snrpd2, snrpd3, snrpe, snrpf and snrpg that assemble in a heptameric protein ring on the Sm site of the small nuclear RNA to form the core snRNP, and at least three U1 snRNP-specific proteins snrnp70/U1-70K, snrpa/U1-A and snrpc/U1-C.

Its subcellular location is the nucleus. Functionally, component of the spliceosomal U1 snRNP, which is essential for recognition of the pre-mRNA 5' splice-site and the subsequent assembly of the spliceosome. U1 snRNP is the first snRNP to interact with pre-mRNA. This interaction is required for the subsequent binding of U2 snRNP and the U4/U6/U5 tri-snRNP. Snrpa binds stem loop II of U1 snRNA. This is U1 small nuclear ribonucleoprotein A (snrpa) from Xenopus laevis (African clawed frog).